The sequence spans 216 residues: Endo-1,4-beta-xylanase 1 (216 aa).

The first 19 residues, 1–19 (MFLTSVVSLVVGAISCVSA), serve as a signal peptide directing secretion. Residues 29 to 216 (QMTPRNSCYG…SSGSASITVS (188 aa)) enclose the GH11 domain. The active-site Nucleophile is Glu-112. The active-site Proton donor is Glu-203.

This sequence belongs to the glycosyl hydrolase 11 (cellulase G) family.

Its subcellular location is the secreted. It catalyses the reaction Endohydrolysis of (1-&gt;4)-beta-D-xylosidic linkages in xylans.. Its pathway is glycan degradation; xylan degradation. In terms of biological role, endo-1,4-beta-xylanase involved in the hydrolysis of xylan, a major structural heterogeneous polysaccharide found in plant biomass representing the second most abundant polysaccharide in the biosphere, after cellulose. This is Endo-1,4-beta-xylanase 1 (xyl1) from Claviceps purpurea (Ergot fungus).